Reading from the N-terminus, the 349-residue chain is Variable large protein 19 (349 aa).

Residues 1-18 (MRKRISAIIMTLFMVLVS) form the signal peptide. Cysteine 19 carries the N-palmitoyl cysteine lipid modification. Cysteine 19 carries the S-diacylglycerol cysteine lipid modification.

It belongs to the variable large protein (Vlp) family. Gamma subfamily.

It is found in the cell outer membrane. Functionally, the Vlp and Vsp proteins are antigenically distinct proteins, only one vlp or vsp gene is transcriptionally active at any one time. Switching between these genes is a mechanism of host immune response evasion. In Borrelia hermsii, this protein is Variable large protein 19.